The primary structure comprises 96 residues: Co-chaperonin GroES (96 aa).

Belongs to the GroES chaperonin family. As to quaternary structure, heptamer of 7 subunits arranged in a ring. Interacts with the chaperonin GroEL.

Its subcellular location is the cytoplasm. Together with the chaperonin GroEL, plays an essential role in assisting protein folding. The GroEL-GroES system forms a nano-cage that allows encapsulation of the non-native substrate proteins and provides a physical environment optimized to promote and accelerate protein folding. GroES binds to the apical surface of the GroEL ring, thereby capping the opening of the GroEL channel. This chain is Co-chaperonin GroES, found in Wolbachia sp. subsp. Drosophila simulans (strain wRi).